The chain runs to 229 residues: Large ribosomal subunit protein uL1 (229 aa).

Belongs to the universal ribosomal protein uL1 family. Part of the 50S ribosomal subunit.

Functionally, binds directly to 23S rRNA. The L1 stalk is quite mobile in the ribosome, and is involved in E site tRNA release. Protein L1 is also a translational repressor protein, it controls the translation of the L11 operon by binding to its mRNA. This chain is Large ribosomal subunit protein uL1, found in Streptococcus agalactiae serotype Ia (strain ATCC 27591 / A909 / CDC SS700).